Consider the following 444-residue polypeptide: Probable glycolate oxidase iron-sulfur subunit (444 aa).

4Fe-4S ferredoxin-type domains are found at residues 14–46 (FKERMDEGELLNCMRCGFCLPSCPTYIESGFQE) and 69–100 (EDVERSLSLCLGCRACEPVCPSGVKYGQLLEE). [4Fe-4S] cluster is bound by residues Cys26, Cys29, Cys32, Cys36, Cys78, Cys81, Cys84, and Cys88.

As to quaternary structure, the glycolate oxidase likely consists of several subunits including GlcD and GlcF. The cofactor is [4Fe-4S] cluster.

It is found in the cell membrane. It carries out the reaction glycolate + A = glyoxylate + AH2. It catalyses the reaction (R)-lactate + A = pyruvate + AH2. Component of a complex that catalyzes the oxidation of glycolate to glyoxylate. Is also able to oxidize D-lactate ((R)-lactate). Does not link directly to O(2), and 2,6-dichloroindophenol (DCIP) and phenazine methosulfate (PMS) can act as artificial electron acceptors in vitro, but the physiological molecule that functions as primary electron acceptor during glycolate oxidation is unknown. The sequence is that of Probable glycolate oxidase iron-sulfur subunit (glcF) from Bacillus subtilis (strain 168).